We begin with the raw amino-acid sequence, 573 residues long: Peptidyl-prolyl cis-trans isomerase-like 2 (573 aa).

Residues Gln37 to Lys119 enclose the U-box domain. Residues Lys223 to Glu247 are disordered. Positions Lys236–Glu247 are enriched in basic and acidic residues. The PPIase cyclophilin-type domain occupies Ser312–Val469. Basic and acidic residues predominate over residues Asp489 to Thr510. Positions Asp489–Thr515 are disordered.

Belongs to the cyclophilin-type PPIase family. PPIL2 subfamily.

The protein resides in the nucleus. The enzyme catalyses [protein]-peptidylproline (omega=180) = [protein]-peptidylproline (omega=0). The catalysed reaction is S-ubiquitinyl-[E2 ubiquitin-conjugating enzyme]-L-cysteine + [acceptor protein]-L-lysine = [E2 ubiquitin-conjugating enzyme]-L-cysteine + N(6)-ubiquitinyl-[acceptor protein]-L-lysine.. Its pathway is protein modification; protein ubiquitination. May catalyze the cis-trans isomerization of proline imidic peptide bonds in oligopeptides thereby assisting the folding of proteins. May also function as a chaperone, playing a role in intracellular transport of proteins. May also have a protein ubiquitin ligase activity acting as an E3 ubiquitin protein ligase or as a ubiquitin-ubiquitin ligase promoting elongation of ubiquitin chains on proteins. The sequence is that of Peptidyl-prolyl cis-trans isomerase-like 2 (CYP8) from Cryptococcus neoformans var. neoformans serotype D (strain B-3501A) (Filobasidiella neoformans).